The sequence spans 331 residues: Holliday junction branch migration complex subunit RuvB (331 aa).

Residues 1 to 182 (MSSDTLHKYE…FGIPLHLEFY (182 aa)) form a large ATPase domain (RuvB-L) region. ATP contacts are provided by residues L21, R22, G63, K66, T67, T68, 129–131 (EDY), R172, Y182, and R219. Residue T67 coordinates Mg(2+). Residues 183–254 (SVDELVLVIK…FANSALFRLG (72 aa)) are small ATPAse domain (RuvB-S). The head domain (RuvB-H) stretch occupies residues 257–331 (GAGFDKMDLK…FEYLLSSKYI (75 aa)). DNA-binding residues include R310 and R315.

It belongs to the RuvB family. As to quaternary structure, homohexamer. Forms an RuvA(8)-RuvB(12)-Holliday junction (HJ) complex. HJ DNA is sandwiched between 2 RuvA tetramers; dsDNA enters through RuvA and exits via RuvB. An RuvB hexamer assembles on each DNA strand where it exits the tetramer. Each RuvB hexamer is contacted by two RuvA subunits (via domain III) on 2 adjacent RuvB subunits; this complex drives branch migration. In the full resolvosome a probable DNA-RuvA(4)-RuvB(12)-RuvC(2) complex forms which resolves the HJ.

The protein resides in the cytoplasm. The enzyme catalyses ATP + H2O = ADP + phosphate + H(+). The RuvA-RuvB-RuvC complex processes Holliday junction (HJ) DNA during genetic recombination and DNA repair, while the RuvA-RuvB complex plays an important role in the rescue of blocked DNA replication forks via replication fork reversal (RFR). RuvA specifically binds to HJ cruciform DNA, conferring on it an open structure. The RuvB hexamer acts as an ATP-dependent pump, pulling dsDNA into and through the RuvAB complex. RuvB forms 2 homohexamers on either side of HJ DNA bound by 1 or 2 RuvA tetramers; 4 subunits per hexamer contact DNA at a time. Coordinated motions by a converter formed by DNA-disengaged RuvB subunits stimulates ATP hydrolysis and nucleotide exchange. Immobilization of the converter enables RuvB to convert the ATP-contained energy into a lever motion, pulling 2 nucleotides of DNA out of the RuvA tetramer per ATP hydrolyzed, thus driving DNA branch migration. The RuvB motors rotate together with the DNA substrate, which together with the progressing nucleotide cycle form the mechanistic basis for DNA recombination by continuous HJ branch migration. Branch migration allows RuvC to scan DNA until it finds its consensus sequence, where it cleaves and resolves cruciform DNA. The chain is Holliday junction branch migration complex subunit RuvB from Anaplasma marginale (strain St. Maries).